Reading from the N-terminus, the 154-residue chain is Transcriptional repressor NrdR (154 aa).

A zinc finger lies at 3 to 34; the sequence is CPFCGANDTKVIDSRLVAEGEQVRRRRECLAC. The ATP-cone domain occupies 49–139; it reads PRLIKQDGSR…VYRRFQDLNE (91 aa).

It belongs to the NrdR family. Zn(2+) is required as a cofactor.

Its function is as follows. Negatively regulates transcription of bacterial ribonucleotide reductase nrd genes and operons by binding to NrdR-boxes. In Pseudomonas syringae pv. tomato (strain ATCC BAA-871 / DC3000), this protein is Transcriptional repressor NrdR.